Here is a 466-residue protein sequence, read N- to C-terminus: Cysteine--tRNA ligase (466 aa).

Zn(2+) is bound at residue cysteine 28. The short motif at proline 30–asparagine 40 is the 'HIGH' region element. Residues cysteine 208, histidine 233, and glutamate 237 each contribute to the Zn(2+) site. The 'KMSKS' region motif lies at lysine 265 to serine 269. Lysine 268 contacts ATP.

Belongs to the class-I aminoacyl-tRNA synthetase family. In terms of assembly, monomer. Requires Zn(2+) as cofactor.

The protein resides in the cytoplasm. The enzyme catalyses tRNA(Cys) + L-cysteine + ATP = L-cysteinyl-tRNA(Cys) + AMP + diphosphate. The chain is Cysteine--tRNA ligase from Staphylococcus aureus (strain Mu3 / ATCC 700698).